A 311-amino-acid chain; its full sequence is R2-like ligand binding oxidase (311 aa).

Mn(2+) is bound by residues E68, E101, and H104. Positions 71-162 (VTQDIQPFMA…AAQVRASVTY (92 aa)) form a cross-link, 3-(O4'-tyrosyl)-valine (Val-Tyr). E101 is a Fe cation binding site. Fe cation contacts are provided by E167, E202, and H205.

This sequence belongs to the ribonucleoside diphosphate reductase small chain family. R2-like ligand binding oxidase subfamily. In terms of assembly, homodimer. The cofactor is Fe cation. It depends on Mn(2+) as a cofactor.

In terms of biological role, probable oxidase that might be involved in lipid metabolism. In Mycobacterium avium (strain 104), this protein is R2-like ligand binding oxidase.